Consider the following 414-residue polypeptide: 5-aminolevulinate synthase (414 aa).

Substrate-binding residues include Arg22, Ser133, and Lys152. 3 residues coordinate pyridoxal 5'-phosphate: Ser185, His213, and Thr241. Lys244 is an active-site residue. Lys244 carries the post-translational modification N6-(pyridoxal phosphate)lysine. The pyridoxal 5'-phosphate site is built by Thr273 and Thr274. Thr359 is a substrate binding site.

Belongs to the class-II pyridoxal-phosphate-dependent aminotransferase family. Homodimer. Pyridoxal 5'-phosphate serves as cofactor.

It carries out the reaction succinyl-CoA + glycine + H(+) = 5-aminolevulinate + CO2 + CoA. The protein operates within porphyrin-containing compound metabolism; protoporphyrin-IX biosynthesis; 5-aminolevulinate from glycine: step 1/1. In Rickettsia prowazekii (strain Madrid E), this protein is 5-aminolevulinate synthase (hemA).